A 583-amino-acid chain; its full sequence is Arginine--tRNA ligase (583 aa).

The short motif at 121-131 (ANPTGPLHLGH) is the 'HIGH' region element.

It belongs to the class-I aminoacyl-tRNA synthetase family. In terms of assembly, monomer.

The protein resides in the cytoplasm. It carries out the reaction tRNA(Arg) + L-arginine + ATP = L-arginyl-tRNA(Arg) + AMP + diphosphate. The protein is Arginine--tRNA ligase (argS) of Aquifex aeolicus (strain VF5).